A 316-amino-acid chain; its full sequence is KRR1 small subunit processome component (316 aa).

A KH domain is found at 122–192 (ACDVIKIGNF…VRRVVEDCMK (71 aa)). Over residues 279-304 (KKLNEQKEKQMEREIERQEERAKDFI) the composition is skewed to basic and acidic residues. A disordered region spans residues 279–316 (KKLNEQKEKQMEREIERQEERAKDFIAPEEEAYKPNQN).

Belongs to the KRR1 family. Component of the ribosomal small subunit (SSU) processome composed of at least 40 protein subunits and snoRNA U3. Interacts with snoRNA U3. Interacts with MPP10, KRI1 and with ribosomal proteins RPS1A, RPS4A, RPS4B, RPS8A, RPS8B, RPS11A, RPS11B, RPS13, RPS24, RPS25, RPL4A, RPL7B, RPL8, RPL23, RPL25 and RPL28.

The protein localises to the nucleus. It is found in the nucleolus. In terms of biological role, required for 40S ribosome biogenesis. Involved in nucleolar processing of pre-18S ribosomal RNA and ribosome assembly. Essential for vegetative growth. The chain is KRR1 small subunit processome component from Saccharomyces cerevisiae (strain RM11-1a) (Baker's yeast).